We begin with the raw amino-acid sequence, 296 residues long: NAD kinase (296 aa).

The active-site Proton acceptor is Asp-72. NAD(+) contacts are provided by residues 72–73, 146–147, Arg-157, Arg-174, Asp-176, 187–192, and Gln-247; these read DG, ND, and TAYALS.

The protein belongs to the NAD kinase family. A divalent metal cation is required as a cofactor.

Its subcellular location is the cytoplasm. It catalyses the reaction NAD(+) + ATP = ADP + NADP(+) + H(+). Involved in the regulation of the intracellular balance of NAD and NADP, and is a key enzyme in the biosynthesis of NADP. Catalyzes specifically the phosphorylation on 2'-hydroxyl of the adenosine moiety of NAD to yield NADP. This Hahella chejuensis (strain KCTC 2396) protein is NAD kinase.